Reading from the N-terminus, the 451-residue chain is Exodeoxyribonuclease 7 large subunit (451 aa).

The protein belongs to the XseA family. Heterooligomer composed of large and small subunits.

Its subcellular location is the cytoplasm. The enzyme catalyses Exonucleolytic cleavage in either 5'- to 3'- or 3'- to 5'-direction to yield nucleoside 5'-phosphates.. Functionally, bidirectionally degrades single-stranded DNA into large acid-insoluble oligonucleotides, which are then degraded further into small acid-soluble oligonucleotides. This chain is Exodeoxyribonuclease 7 large subunit, found in Neisseria meningitidis serogroup C / serotype 2a (strain ATCC 700532 / DSM 15464 / FAM18).